The chain runs to 229 residues: Flagellar L-ring protein (229 aa).

Positions 1-25 (MKQVRLLPPAPVRAVCALAVAALAG) are cleaved as a signal peptide. Residue cysteine 26 is the site of N-palmitoyl cysteine attachment. Cysteine 26 carries the S-diacylglycerol cysteine lipid modification.

Belongs to the FlgH family. As to quaternary structure, the basal body constitutes a major portion of the flagellar organelle and consists of four rings (L,P,S, and M) mounted on a central rod.

The protein localises to the cell outer membrane. The protein resides in the bacterial flagellum basal body. Assembles around the rod to form the L-ring and probably protects the motor/basal body from shearing forces during rotation. In Burkholderia ambifaria (strain ATCC BAA-244 / DSM 16087 / CCUG 44356 / LMG 19182 / AMMD) (Burkholderia cepacia (strain AMMD)), this protein is Flagellar L-ring protein.